The following is a 172-amino-acid chain: Caltractin (172 aa).

The disordered stretch occupies residues 1-23 (MQKYGSKKIGATSATSSNKQKVQ). Residues 12–21 (TSATSSNKQK) are compositionally biased toward polar residues. EF-hand domains lie at 29–64 (EQRQEIKEAFDLFDMDGSGKIDAKELKVAMRALGFE), 65–99 (PKKEEIKKMISGIDNGSGKIDFNDFLQLMTAKMSE), 101–136 (DSHAEIMKAFRLFDEDDSGFITFANLKRVAKDLGEN), and 137–172 (MTDEELREMIEEADRSNQGQISKEDFLRIMKKTNLF). Residues aspartate 42, aspartate 44, serine 46, lysine 48, and glutamate 53 each coordinate Ca(2+).

This sequence belongs to the centrin family. Monomer.

Its subcellular location is the cytoplasm. It is found in the cytoskeleton. It localises to the microtubule organizing center. The protein resides in the centrosome. In terms of biological role, plays a fundamental role in microtubule-organizing center structure and function. The chain is Caltractin (CTN) from Naegleria gruberi (Amoeba).